The following is a 720-amino-acid chain: Phosphoribosylformylglycinamidine synthase subunit PurL (720 aa).

The active site involves His-34. Tyr-37 serves as a coordination point for ATP. Glu-83 contacts Mg(2+). Substrate contacts are provided by residues 84 to 87 (SHNH) and Arg-106. Residue His-85 is the Proton acceptor of the active site. Asp-107 is a binding site for Mg(2+). Gln-231 is a substrate binding site. Asp-259 contributes to the Mg(2+) binding site. Residue 303–305 (ESQ) participates in substrate binding. Residues Asp-480 and Gly-517 each coordinate ATP. Asn-518 serves as a coordination point for Mg(2+). Substrate is bound at residue Ser-520.

It belongs to the FGAMS family. Monomer. Part of the FGAM synthase complex composed of 1 PurL, 1 PurQ and 2 PurS subunits.

It is found in the cytoplasm. It catalyses the reaction N(2)-formyl-N(1)-(5-phospho-beta-D-ribosyl)glycinamide + L-glutamine + ATP + H2O = 2-formamido-N(1)-(5-O-phospho-beta-D-ribosyl)acetamidine + L-glutamate + ADP + phosphate + H(+). Its pathway is purine metabolism; IMP biosynthesis via de novo pathway; 5-amino-1-(5-phospho-D-ribosyl)imidazole from N(2)-formyl-N(1)-(5-phospho-D-ribosyl)glycinamide: step 1/2. Functionally, part of the phosphoribosylformylglycinamidine synthase complex involved in the purines biosynthetic pathway. Catalyzes the ATP-dependent conversion of formylglycinamide ribonucleotide (FGAR) and glutamine to yield formylglycinamidine ribonucleotide (FGAM) and glutamate. The FGAM synthase complex is composed of three subunits. PurQ produces an ammonia molecule by converting glutamine to glutamate. PurL transfers the ammonia molecule to FGAR to form FGAM in an ATP-dependent manner. PurS interacts with PurQ and PurL and is thought to assist in the transfer of the ammonia molecule from PurQ to PurL. This Haloarcula marismortui (strain ATCC 43049 / DSM 3752 / JCM 8966 / VKM B-1809) (Halobacterium marismortui) protein is Phosphoribosylformylglycinamidine synthase subunit PurL.